The chain runs to 267 residues: 3-methyl-2-oxobutanoate hydroxymethyltransferase (267 aa).

Mg(2+)-binding residues include aspartate 45 and aspartate 84. Residues 45-46 (DS), aspartate 84, and lysine 113 each bind 3-methyl-2-oxobutanoate. Glutamate 115 serves as a coordination point for Mg(2+). The active-site Proton acceptor is the glutamate 182.

The protein belongs to the PanB family. Homodecamer; pentamer of dimers. Mg(2+) is required as a cofactor.

It localises to the cytoplasm. It carries out the reaction 3-methyl-2-oxobutanoate + (6R)-5,10-methylene-5,6,7,8-tetrahydrofolate + H2O = 2-dehydropantoate + (6S)-5,6,7,8-tetrahydrofolate. The protein operates within cofactor biosynthesis; coenzyme A biosynthesis. In terms of biological role, catalyzes the reversible reaction in which hydroxymethyl group from 5,10-methylenetetrahydrofolate is transferred onto alpha-ketoisovalerate to form ketopantoate. The polypeptide is 3-methyl-2-oxobutanoate hydroxymethyltransferase (Saccharolobus solfataricus (strain ATCC 35092 / DSM 1617 / JCM 11322 / P2) (Sulfolobus solfataricus)).